The chain runs to 98 residues: NADH-ubiquinone oxidoreductase chain 4L (98 aa).

3 consecutive transmembrane segments (helical) span residues 1-21 (MTPT…GMLT), 27-47 (VASL…ATLI), and 61-81 (IILL…LISI).

Belongs to the complex I subunit 4L family. Core subunit of respiratory chain NADH dehydrogenase (Complex I) which is composed of 45 different subunits.

The protein localises to the mitochondrion inner membrane. It carries out the reaction a ubiquinone + NADH + 5 H(+)(in) = a ubiquinol + NAD(+) + 4 H(+)(out). In terms of biological role, core subunit of the mitochondrial membrane respiratory chain NADH dehydrogenase (Complex I) which catalyzes electron transfer from NADH through the respiratory chain, using ubiquinone as an electron acceptor. Part of the enzyme membrane arm which is embedded in the lipid bilayer and involved in proton translocation. This Macaca fascicularis (Crab-eating macaque) protein is NADH-ubiquinone oxidoreductase chain 4L (MT-ND4L).